The following is a 107-amino-acid chain: Thioredoxin 1 (107 aa).

The Thioredoxin domain maps to 2–107; that stretch reads SVAAAVTDAT…TLANTLDKHL (106 aa). Cysteine 32 and cysteine 35 are disulfide-bonded.

This sequence belongs to the thioredoxin family.

Functionally, participates in various redox reactions through the reversible oxidation of its active center dithiol to a disulfide and catalyzes dithiol-disulfide exchange reactions. The sequence is that of Thioredoxin 1 (trxA) from Synechococcus elongatus (strain ATCC 33912 / PCC 7942 / FACHB-805) (Anacystis nidulans R2).